Consider the following 1194-residue polypeptide: Immunoglobulin superfamily member 3 (1194 aa).

The signal sequence occupies residues 1 to 19 (MKCFFPVLSCLAVLGVVSA). 8 consecutive Ig-like C2-type domains span residues 20-138 (QRQV…AKMN), 143-262 (PDSL…WYAM), 276-386 (PTDK…KTVT), 401-539 (PIVV…VSIT), 545-661 (FAVT…WTRL), 676-803 (PVTK…EEVS), 813-945 (PDSR…TAVT), and 949-1097 (PDAA…YRLT). Topologically, residues 20–1124 (QRQVTVQEGP…LQSLICSNDA (1105 aa)) are extracellular. Intrachain disulfides connect C42–C120 and C167–C246. Residue N43 is glycosylated (N-linked (GlcNAc...) asparagine). The EWI motif signature appears at 250-252 (EWI). Cysteines 302 and 376 form a disulfide. N418 is a glycosylation site (N-linked (GlcNAc...) asparagine). Disulfide bonds link C432/C511, C566/C645, C701/C782, C838/C918, and C974/C1080. A glycan (N-linked (GlcNAc...) asparagine) is linked at N842. The segment at 997-1030 (GGGKRGSLGIDEQEEEEEEEDISQEEDSEDPTER) is disordered. The span at 1007-1026 (DEQEEEEEEEDISQEEDSED) shows a compositional bias: acidic residues. A glycan (N-linked (GlcNAc...) asparagine) is linked at N1077. Residues 1125-1145 (LFYFVFFYPFPIFGILIITIL) form a helical membrane-spanning segment. Residues 1146-1194 (LVRFKSRNSSKNSEGKNGVPLLWIKEPHLNYSPTCLEPPVLSIHPGAID) lie on the Cytoplasmic side of the membrane.

Expressed in the lacrimal duct and lacrimal gland.

It localises to the membrane. The polypeptide is Immunoglobulin superfamily member 3 (Igsf3) (Mus musculus (Mouse)).